A 176-amino-acid chain; its full sequence is Inorganic pyrophosphatase (176 aa).

Substrate is bound by residues Lys-30, Arg-44, and Tyr-56. Residues Asp-66, Asp-71, and Asp-103 each contribute to the Mg(2+) site. Residue Tyr-142 coordinates substrate.

This sequence belongs to the PPase family. As to quaternary structure, homohexamer. Mg(2+) is required as a cofactor.

It localises to the cytoplasm. The catalysed reaction is diphosphate + H2O = 2 phosphate + H(+). Its function is as follows. Catalyzes the hydrolysis of inorganic pyrophosphate (PPi) forming two phosphate ions. This Escherichia coli O6:H1 (strain CFT073 / ATCC 700928 / UPEC) protein is Inorganic pyrophosphatase.